A 230-amino-acid chain; its full sequence is CASP-like protein 2A2 (230 aa).

The interval 1-23 (MEKKDEGNPPMAVMGSRDENEDV) is disordered. Over 1–29 (MEKKDEGNPPMAVMGSRDENEDVKSTMRT) the chain is Cytoplasmic. The helical transmembrane segment at 30–50 (AETMLRLVPVALCVSALVVML) threads the bilayer. Residues 51-71 (KNTQTNDYGSLSYSDLGAFRY) are Extracellular-facing. Residues 72–92 (LVNANGICAGYSLLSAVIVAM) form a helical membrane-spanning segment. The Cytoplasmic portion of the chain corresponds to 93 to 100 (PRAWTMPQ). Residues 101 to 121 (AWTFFLLDQVLTYVILAAGTV) traverse the membrane as a helical segment. The Extracellular segment spans residues 122 to 151 (STEVLYLANKGDTSIAWSAACASFGGFCHK). Residues 152 to 172 (ALISTVITFVAVIFYAALSLV) form a helical membrane-spanning segment. At 173-230 (SSYKLFSKYDAPVVTQSGEGIKTVTLGSPPPPPPPPPSNLHLHLHAKLACPAHNNSPN) the chain is on the cytoplasmic side.

The protein belongs to the Casparian strip membrane proteins (CASP) family. Homodimer and heterodimers.

Its subcellular location is the cell membrane. The polypeptide is CASP-like protein 2A2 (Populus trichocarpa (Western balsam poplar)).